The following is a 365-amino-acid chain: Probable UDP-arabinopyranose mutase 1 (365 aa).

The DXD motif signature appears at 100–102 (DDD). N-linked (Glc...) arginine glycosylation occurs at Arg148.

It belongs to the RGP family. Homopentamer or homohexamer. Mn(2+) is required as a cofactor. It depends on Mg(2+) as a cofactor. Reversibly glycosylated by UDP-glucose, UDP-xylose and UDP-galactose, but not UDP-mannose. As to expression, expressed in all tissues tested, including root, tuber, leaf, petiole, shoot, stolon and stem.

It is found in the secreted. Its subcellular location is the cell wall. The protein resides in the cell junction. The protein localises to the plasmodesma. It localises to the golgi apparatus. It catalyses the reaction UDP-beta-L-arabinofuranose = UDP-beta-L-arabinopyranose. Functionally, probable UDP-L-arabinose mutase involved in the biosynthesis of cell wall non-cellulosic polysaccharides. Was initially shown to possess an autoglycosylating activity which is dependent on the presence of UDP-glucose and manganese. In Solanum tuberosum (Potato), this protein is Probable UDP-arabinopyranose mutase 1.